Here is a 387-residue protein sequence, read N- to C-terminus: 3-hydroxy-D-aspartate aldolase (387 aa).

Lys-62 is modified (N6-(pyridoxal phosphate)lysine). Pyridoxal 5'-phosphate is bound at residue Gln-85. The segment at 199–228 (HGQLRGPQGQAGRRHCPGERGRGRAGGRGL) is disordered. Pyridoxal 5'-phosphate is bound by residues Thr-238, 256–257 (GS), and Tyr-265. Residues His-355 and Asp-357 each coordinate Mg(2+).

It belongs to the DSD1 family. As to quaternary structure, homodimer. Pyridoxal 5'-phosphate serves as cofactor. The cofactor is Mn(2+). Requires Mg(2+) as cofactor. It depends on Co(2+) as a cofactor.

The enzyme catalyses (3S)-3-hydroxy-D-aspartate = glyoxylate + glycine. The catalysed reaction is (3R)-3-hydroxy-D-aspartate = glyoxylate + glycine. Catalyzes the condensation of glyoxylate and glycine into (2R,3S)-beta-hydroxyaspartate ((3S)-3-hydroxy-D-aspartate). Functions in glyoxylate assimilation via the beta-hydroxyaspartate cycle (BHAC). In vitro catalyzes the cleavage of both D-erythro- and D-threo-3-hydroxyaspartate to glycine and glyoxylate. Also acts on D-threonine, D-3-phenylserine and D-3-3,4-methylenedioxyphenylserine. The chain is 3-hydroxy-D-aspartate aldolase (dhaa) from Paracoccus denitrificans.